Here is an 81-residue protein sequence, read N- to C-terminus: Sulfur carrier protein TusA (81 aa).

The active-site Cysteine persulfide intermediate is the cysteine 20.

This sequence belongs to the sulfur carrier protein TusA family.

The protein resides in the cytoplasm. Functionally, sulfur carrier protein which probably makes part of a sulfur-relay system. The polypeptide is Sulfur carrier protein TusA (Colwellia psychrerythraea (strain 34H / ATCC BAA-681) (Vibrio psychroerythus)).